Here is a 1208-residue protein sequence, read N- to C-terminus: DNA-directed RNA polymerase subunit beta (1208 aa).

The interval 1182–1208 (EKKAAEQVEDEKDDVIQNFETAEDNLD) is disordered.

This sequence belongs to the RNA polymerase beta chain family. The RNAP catalytic core consists of 2 alpha, 1 beta, 1 beta' and 1 omega subunit. When a sigma factor is associated with the core the holoenzyme is formed, which can initiate transcription.

The catalysed reaction is RNA(n) + a ribonucleoside 5'-triphosphate = RNA(n+1) + diphosphate. Its function is as follows. DNA-dependent RNA polymerase catalyzes the transcription of DNA into RNA using the four ribonucleoside triphosphates as substrates. This Enterococcus faecium (Streptococcus faecium) protein is DNA-directed RNA polymerase subunit beta.